Reading from the N-terminus, the 349-residue chain is MSILFNAYPLARPALFAMDAETAHEVTLASLQRAYDCGTTRRWLHDQPQLPTTLMGMTLRNPVGLAAGLDKNGAFIDALGNLGFGFVEVGTVTPRAQSGNPKPRMFRLPKANALINRLGFNNQGLDAFLANVTRSRFRSQGGILGLNIGKNADTPIERAADDYLIGLAGVYPHADYVTVNISSPNTKNLRALQGGDELSQLLAALRDKRAELAQQHARQVPLVVKIAPDLSQEQIDIIADTLLSNGVDGVIATNTTLSREAVQGMPHAAETGGLSGAPVHELSLAVIERLRQRVGSALAIIGVGGILSGQQAREKIAAGADAVQLYTGLIYRGPALVGECVGTLKNTAR.

FMN contacts are provided by residues 67 to 71 and Thr-91; that span reads AGLDK. Substrate is bound at residue Lys-71. Substrate is bound at residue 116–120; sequence NRLGF. 2 residues coordinate FMN: Asn-147 and Asn-180. Position 180 (Asn-180) interacts with substrate. The active-site Nucleophile is Ser-183. Asn-185 contacts substrate. FMN is bound by residues Lys-225 and Thr-253. Position 254–255 (254–255) interacts with substrate; it reads NT. FMN-binding positions include Gly-276, Gly-305, and 326-327; that span reads YT.

Belongs to the dihydroorotate dehydrogenase family. Type 2 subfamily. Monomer. FMN serves as cofactor.

Its subcellular location is the cell membrane. It carries out the reaction (S)-dihydroorotate + a quinone = orotate + a quinol. It participates in pyrimidine metabolism; UMP biosynthesis via de novo pathway; orotate from (S)-dihydroorotate (quinone route): step 1/1. Functionally, catalyzes the conversion of dihydroorotate to orotate with quinone as electron acceptor. The chain is Dihydroorotate dehydrogenase (quinone) from Bordetella avium (strain 197N).